The primary structure comprises 136 residues: MIPGEIITKSTEVEINNHHPETVIEVENTGDRPIQVGSHFHFYEANAALDFEREMAYGKHLDIPAGAAVRFEPGDKKEVQLVEYAGKRKIFGFRGMVNGPIDESRVYRPTDENDEYAGVFGDNGAENVNKKGRKRS.

A disordered region spans residues 113-136 (NDEYAGVFGDNGAENVNKKGRKRS).

Belongs to the urease beta subunit family. In terms of assembly, heterotrimer of UreA (gamma), UreB (beta) and UreC (alpha) subunits. Three heterotrimers associate to form the active enzyme.

It is found in the cytoplasm. The catalysed reaction is urea + 2 H2O + H(+) = hydrogencarbonate + 2 NH4(+). The protein operates within nitrogen metabolism; urea degradation; CO(2) and NH(3) from urea (urease route): step 1/1. The protein is Urease subunit beta of Staphylococcus aureus (strain Newman).